A 258-amino-acid chain; its full sequence is Tryptophan synthase alpha chain (258 aa).

Catalysis depends on proton acceptor residues E52 and D63.

Belongs to the TrpA family. In terms of assembly, tetramer of two alpha and two beta chains.

It catalyses the reaction (1S,2R)-1-C-(indol-3-yl)glycerol 3-phosphate + L-serine = D-glyceraldehyde 3-phosphate + L-tryptophan + H2O. It participates in amino-acid biosynthesis; L-tryptophan biosynthesis; L-tryptophan from chorismate: step 5/5. The alpha subunit is responsible for the aldol cleavage of indoleglycerol phosphate to indole and glyceraldehyde 3-phosphate. The sequence is that of Tryptophan synthase alpha chain from Streptococcus pneumoniae (strain JJA).